The following is a 274-amino-acid chain: Dermonecrotic toxin SdSicTox-betaIIB1bxiii (274 aa).

Histidine 5 is a catalytic residue. Glutamate 25 and aspartate 27 together coordinate Mg(2+). The active-site Nucleophile is histidine 41. 2 disulfides stabilise this stretch: cysteine 45-cysteine 51 and cysteine 47-cysteine 190. Residue aspartate 85 participates in Mg(2+) binding.

The protein belongs to the arthropod phospholipase D family. Class II subfamily. Mg(2+) serves as cofactor. In terms of tissue distribution, expressed by the venom gland.

It is found in the secreted. The enzyme catalyses an N-(acyl)-sphingosylphosphocholine = an N-(acyl)-sphingosyl-1,3-cyclic phosphate + choline. It carries out the reaction an N-(acyl)-sphingosylphosphoethanolamine = an N-(acyl)-sphingosyl-1,3-cyclic phosphate + ethanolamine. It catalyses the reaction a 1-acyl-sn-glycero-3-phosphocholine = a 1-acyl-sn-glycero-2,3-cyclic phosphate + choline. The catalysed reaction is a 1-acyl-sn-glycero-3-phosphoethanolamine = a 1-acyl-sn-glycero-2,3-cyclic phosphate + ethanolamine. In terms of biological role, dermonecrotic toxins cleave the phosphodiester linkage between the phosphate and headgroup of certain phospholipids (sphingolipid and lysolipid substrates), forming an alcohol (often choline) and a cyclic phosphate. This toxin acts on sphingomyelin (SM). It may also act on ceramide phosphoethanolamine (CPE), lysophosphatidylcholine (LPC) and lysophosphatidylethanolamine (LPE), but not on lysophosphatidylserine (LPS), and lysophosphatidylglycerol (LPG). It acts by transphosphatidylation, releasing exclusively cyclic phosphate products as second products. Induces dermonecrosis, hemolysis, increased vascular permeability, edema, inflammatory response, and platelet aggregation. The polypeptide is Dermonecrotic toxin SdSicTox-betaIIB1bxiii (Sicarius cf. damarensis (strain GJB-2008) (Six-eyed sand spider)).